We begin with the raw amino-acid sequence, 340 residues long: MAVTMYYEEDVEVAALAGKKIAVIGYGSQGHAHAQNLRDSGHDVIIGVRQGKSFDRAKEDGFETFEVGEAVAKADVIMVLAPDELQQSIYEEDIKPNLKSGSALGFAHGFNIHFGYIEVPEDVDVFMVAPKAPGHLVRRTFTEGFGTPALFVSHQNATGHAREIAMDWAKGIGCARVGIIETTFKEETEEDLFGEQAVLCGGLTALVEAGFETLTEARYAGELAYFEVLHEMKLIVDLMYEGGFTKMRQSISNTAEFGDYVTGPRIITDEVKKNMKLVLADIQSGKFAQDFVDDFKAGRPKLTAYREAAKNLEIEKIGAELRKAMPFTQSGDDDAFKIYQ.

In terms of domain architecture, KARI N-terminal Rossmann spans 3–182; it reads VTMYYEEDVE…GCARVGIIET (180 aa). NADP(+) is bound by residues 26–29, arginine 49, serine 53, and 83–86; these read YGSQ and DELQ. Histidine 108 is an active-site residue. An NADP(+)-binding site is contributed by glycine 134. In terms of domain architecture, KARI C-terminal knotted spans 183 to 328; sequence TFKEETEEDL…AELRKAMPFT (146 aa). Aspartate 191, glutamate 195, glutamate 227, and glutamate 231 together coordinate Mg(2+). Residue serine 252 coordinates substrate.

The protein belongs to the ketol-acid reductoisomerase family. It depends on Mg(2+) as a cofactor.

It carries out the reaction (2R)-2,3-dihydroxy-3-methylbutanoate + NADP(+) = (2S)-2-acetolactate + NADPH + H(+). The catalysed reaction is (2R,3R)-2,3-dihydroxy-3-methylpentanoate + NADP(+) = (S)-2-ethyl-2-hydroxy-3-oxobutanoate + NADPH + H(+). Its pathway is amino-acid biosynthesis; L-isoleucine biosynthesis; L-isoleucine from 2-oxobutanoate: step 2/4. The protein operates within amino-acid biosynthesis; L-valine biosynthesis; L-valine from pyruvate: step 2/4. In terms of biological role, involved in the biosynthesis of branched-chain amino acids (BCAA). Catalyzes an alkyl-migration followed by a ketol-acid reduction of (S)-2-acetolactate (S2AL) to yield (R)-2,3-dihydroxy-isovalerate. In the isomerase reaction, S2AL is rearranged via a Mg-dependent methyl migration to produce 3-hydroxy-3-methyl-2-ketobutyrate (HMKB). In the reductase reaction, this 2-ketoacid undergoes a metal-dependent reduction by NADPH to yield (R)-2,3-dihydroxy-isovalerate. This is Ketol-acid reductoisomerase (NADP(+)) from Lactococcus lactis subsp. cremoris (strain SK11).